The chain runs to 378 residues: UPF0754 membrane protein BcerKBAB4_0766 (378 aa).

Transmembrane regions (helical) follow at residues 1–21 (MNIWLNMLITTGLGAIIGGYT) and 357–377 (YLGALLGGTIGFIQGLLLLFL).

This sequence belongs to the UPF0754 family.

It localises to the cell membrane. The polypeptide is UPF0754 membrane protein BcerKBAB4_0766 (Bacillus mycoides (strain KBAB4) (Bacillus weihenstephanensis)).